The following is a 130-amino-acid chain: Small ribosomal subunit protein uS9 (130 aa).

This sequence belongs to the universal ribosomal protein uS9 family.

The chain is Small ribosomal subunit protein uS9 from Delftia acidovorans (strain DSM 14801 / SPH-1).